The sequence spans 252 residues: 3-deoxy-manno-octulosonate cytidylyltransferase (252 aa).

The protein belongs to the KdsB family.

It localises to the cytoplasm. The enzyme catalyses 3-deoxy-alpha-D-manno-oct-2-ulosonate + CTP = CMP-3-deoxy-beta-D-manno-octulosonate + diphosphate. It participates in nucleotide-sugar biosynthesis; CMP-3-deoxy-D-manno-octulosonate biosynthesis; CMP-3-deoxy-D-manno-octulosonate from 3-deoxy-D-manno-octulosonate and CTP: step 1/1. Its pathway is bacterial outer membrane biogenesis; lipopolysaccharide biosynthesis. In terms of biological role, activates KDO (a required 8-carbon sugar) for incorporation into bacterial lipopolysaccharide in Gram-negative bacteria. The protein is 3-deoxy-manno-octulosonate cytidylyltransferase of Vibrio campbellii (strain ATCC BAA-1116).